A 422-amino-acid chain; its full sequence is Tyrosine--tRNA ligase (422 aa).

Tyrosine 35 contacts L-tyrosine. Residues proline 40–asparagine 49 carry the 'HIGH' region motif. 2 residues coordinate L-tyrosine: tyrosine 170 and glutamine 174. The 'KMSKS' region motif lies at lysine 231–threonine 235. Lysine 234 contributes to the ATP binding site. Residues alanine 353–valine 419 form the S4 RNA-binding domain.

This sequence belongs to the class-I aminoacyl-tRNA synthetase family. TyrS type 1 subfamily. As to quaternary structure, homodimer.

It is found in the cytoplasm. The catalysed reaction is tRNA(Tyr) + L-tyrosine + ATP = L-tyrosyl-tRNA(Tyr) + AMP + diphosphate + H(+). Functionally, catalyzes the attachment of tyrosine to tRNA(Tyr) in a two-step reaction: tyrosine is first activated by ATP to form Tyr-AMP and then transferred to the acceptor end of tRNA(Tyr). The polypeptide is Tyrosine--tRNA ligase (Streptomyces avermitilis (strain ATCC 31267 / DSM 46492 / JCM 5070 / NBRC 14893 / NCIMB 12804 / NRRL 8165 / MA-4680)).